Here is a 60-residue protein sequence, read N- to C-terminus: Antimicrobial peptide Eval151 (60 aa).

Residues 1-23 (MKVLPVLFLTLLVLISIPAETFC) form the signal peptide. Arg36 carries the arginine amide modification. Residues 36-54 (RGKRNDFFRSDVSRDDESH) are compositionally biased toward basic and acidic residues. The interval 36–60 (RGKRNDFFRSDVSRDDESHPSPGQK) is disordered. A propeptide spanning residues 37–60 (GKRNDFFRSDVSRDDESHPSPGQK) is cleaved from the precursor.

Belongs to the non-disulfide-bridged peptide (NDBP) superfamily. Expressed by the venom gland.

The protein resides in the secreted. In terms of biological role, probable antimicrobial peptide. Has no inhibitory activity against herpes simplex virus type 1 (HSV-1). In Euscorpiops validus (Scorpion), this protein is Antimicrobial peptide Eval151.